A 578-amino-acid chain; its full sequence is Arginine--tRNA ligase (578 aa).

Residues 127–137 (PNLAKEMHVGH) carry the 'HIGH' region motif.

This sequence belongs to the class-I aminoacyl-tRNA synthetase family. As to quaternary structure, monomer.

Its subcellular location is the cytoplasm. It catalyses the reaction tRNA(Arg) + L-arginine + ATP = L-arginyl-tRNA(Arg) + AMP + diphosphate. The chain is Arginine--tRNA ligase from Pseudomonas entomophila (strain L48).